Here is a 485-residue protein sequence, read N- to C-terminus: uncharacterized protein (485 aa).

11 helical membrane passes run 79 to 99, 117 to 137, 139 to 159, 170 to 190, 199 to 219, 275 to 295, 313 to 333, 355 to 375, 380 to 400, 421 to 441, and 448 to 468; these read LVTL…LIFA, VFAL…FLVF, FFSG…LADL, VIYF…SGFI, WEFW…FLLL, ILIC…LVLI, GLMY…AMPI, LPMG…FGWT, IFWF…IMTS, GVKI…ESLF, and WGCT…PILF.

Belongs to the major facilitator superfamily. CAR1 family.

The protein resides in the golgi apparatus. It localises to the membrane. This is an uncharacterized protein from Schizosaccharomyces pombe (strain 972 / ATCC 24843) (Fission yeast).